A 230-amino-acid polypeptide reads, in one-letter code: Urease accessory protein UreF (230 aa).

The protein belongs to the UreF family. As to quaternary structure, ureD, UreF and UreG form a complex that acts as a GTP-hydrolysis-dependent molecular chaperone, activating the urease apoprotein by helping to assemble the nickel containing metallocenter of UreC. The UreE protein probably delivers the nickel.

The protein localises to the cytoplasm. Its function is as follows. Required for maturation of urease via the functional incorporation of the urease nickel metallocenter. The protein is Urease accessory protein UreF of Allorhizobium ampelinum (strain ATCC BAA-846 / DSM 112012 / S4) (Agrobacterium vitis (strain S4)).